Here is a 309-residue protein sequence, read N- to C-terminus: Tagatose-6-phosphate kinase (309 aa).

Belongs to the carbohydrate kinase PfkB family. LacC subfamily.

The catalysed reaction is D-tagatofuranose 6-phosphate + ATP = D-tagatofuranose 1,6-bisphosphate + ADP + H(+). It participates in carbohydrate metabolism; D-tagatose 6-phosphate degradation; D-glyceraldehyde 3-phosphate and glycerone phosphate from D-tagatose 6-phosphate: step 1/2. This Streptococcus pyogenes serotype M6 (strain ATCC BAA-946 / MGAS10394) protein is Tagatose-6-phosphate kinase.